Reading from the N-terminus, the 289-residue chain is Protoheme IX farnesyltransferase (289 aa).

Transmembrane regions (helical) follow at residues 18 to 38 (VTSL…EQSP), 40 to 60 (GFLI…SFIF), 87 to 107 (VVQA…VLAV), 111 to 131 (LLTA…YTIF), 139 to 159 (NIVI…AAIG), 168 to 188 (SLFM…AIFL), 212 to 232 (SIFF…FLES), 234 to 254 (MGFL…ILSY), and 269 to 289 (FFFS…DHLI).

The protein belongs to the UbiA prenyltransferase family. Protoheme IX farnesyltransferase subfamily.

It is found in the cell inner membrane. It catalyses the reaction heme b + (2E,6E)-farnesyl diphosphate + H2O = Fe(II)-heme o + diphosphate. Its pathway is porphyrin-containing compound metabolism; heme O biosynthesis; heme O from protoheme: step 1/1. In terms of biological role, converts heme B (protoheme IX) to heme O by substitution of the vinyl group on carbon 2 of heme B porphyrin ring with a hydroxyethyl farnesyl side group. This is Protoheme IX farnesyltransferase from Leptospira interrogans serogroup Icterohaemorrhagiae serovar copenhageni (strain Fiocruz L1-130).